A 610-amino-acid polypeptide reads, in one-letter code: MNNRVLVSVAWPYANGPRHIGHVAGFGVPSDVFARYQRMSGAEVLMVSGTDEHGTPLLVQADKEGVSVKELADRYNRQIVEDLAGLGLSYDLFTRTTTRNHYAVVQDLFKGLYENGYMIKETTMGAVSPSTGRTLPDRYIEGTCPICGASGARGDQCDNCGNQLDPADLINPVSKINGETPKFIETEHFLLDLPALADALAAWLKDRKDWRPNVLKFSLNLLEDLRPRAMSRDIDWGIPIPVEGWQDNGAKKLYVWFDAVVGYLSASIEWAYRTGDPEAWKKWWNDPESSGYYFMGKDNITFHSQIWPAELLGYQGKGAKAGSVHSLGELNLPTEVVSSEFLTMSGSKFSSSKGIVIYVKDFLKEFGADPLRYFIAVAGPENNDTDFTWDEFVRRVNNELANGWGNLVNRTVSMAYKNFGEVPTPGELTESDKKILAQAEEAFGVVGEALAHSRFKQGITHAMHIVGEANAYIAEQEPWKLAKDESQRERLATVLWTALQVVSDCNVLLTPYLPHIAQQVHETLGRDGVWAAKPQIVEVTDDMPVEPIGVGIPEAGQTYPVIMGDYAAQQARWARIDVQPGTALSKPKPLIAKLDPELGETGPEWAPVNP.

The 'HIGH' region motif lies at 12-22 (PYANGPRHIGH). 4 residues coordinate Zn(2+): Cys-144, Cys-147, Cys-157, and Cys-160. Residues 348–352 (KFSSS) carry the 'KMSKS' region motif. Residue Ser-351 coordinates ATP.

The protein belongs to the class-I aminoacyl-tRNA synthetase family. MetG type 1 subfamily. As to quaternary structure, monomer. Zn(2+) is required as a cofactor.

It is found in the cytoplasm. It carries out the reaction tRNA(Met) + L-methionine + ATP = L-methionyl-tRNA(Met) + AMP + diphosphate. Is required not only for elongation of protein synthesis but also for the initiation of all mRNA translation through initiator tRNA(fMet) aminoacylation. The chain is Methionine--tRNA ligase from Corynebacterium diphtheriae (strain ATCC 700971 / NCTC 13129 / Biotype gravis).